The sequence spans 491 residues: Trigger factor (491 aa).

The PPIase FKBP-type domain occupies 169–254; it reads GDRVTIDYLG…VKDVAAAAPI (86 aa). The segment at 434-491 is disordered; it reads KVSKEELTAEDDADEKPAKKTASKKKAAAKADAAEGEEAAAPKRKAPAKKKASDESAE. Positions 452 to 461 are enriched in basic residues; that stretch reads KKTASKKKAA.

The protein belongs to the FKBP-type PPIase family. Tig subfamily.

It localises to the cytoplasm. It carries out the reaction [protein]-peptidylproline (omega=180) = [protein]-peptidylproline (omega=0). Functionally, involved in protein export. Acts as a chaperone by maintaining the newly synthesized protein in an open conformation. Functions as a peptidyl-prolyl cis-trans isomerase. This chain is Trigger factor, found in Sinorhizobium medicae (strain WSM419) (Ensifer medicae).